Here is a 220-residue protein sequence, read N- to C-terminus: Type IV major pilin protein PilA (220 aa).

A propeptide spans 1 to 12 (MRVSRFNPRNRG) (leader sequence). Position 13 is an N-methylphenylalanine (phenylalanine 13). A helical membrane pass occupies residues 13–33 (FTLIELMIVVAIIGILAAIAI).

The protein belongs to the N-Me-Phe pilin family.

The protein resides in the fimbrium. It localises to the membrane. The two-component PilS2/PilR2 is required for proper assembly of T4P and regulation. Major component of the type IV pili that are required for social gliding motility through cycles of extension and retraction. Extended pili are composed of thousands of copies of PilA and retract upon binding to extracellular polysaccharides and thereby pull the cell forward. The chain is Type IV major pilin protein PilA (pilA) from Myxococcus xanthus (strain DK1622).